The chain runs to 164 residues: Thiol peroxidase (164 aa).

The 146-residue stretch at 18–163 (VKTGETAPEF…FESALEAYRN (146 aa)) folds into the Thioredoxin domain. Cys60 functions as the Cysteine sulfenic acid (-SOH) intermediate in the catalytic mechanism. An intrachain disulfide couples Cys60 to Cys93.

Belongs to the peroxiredoxin family. Tpx subfamily. Homodimer.

The enzyme catalyses a hydroperoxide + [thioredoxin]-dithiol = an alcohol + [thioredoxin]-disulfide + H2O. Its function is as follows. Thiol-specific peroxidase that catalyzes the reduction of hydrogen peroxide and organic hydroperoxides to water and alcohols, respectively. Plays a role in cell protection against oxidative stress by detoxifying peroxides. The chain is Thiol peroxidase from Staphylococcus saprophyticus subsp. saprophyticus (strain ATCC 15305 / DSM 20229 / NCIMB 8711 / NCTC 7292 / S-41).